A 385-amino-acid chain; its full sequence is Cell division protein FtsZ (385 aa).

GTP is bound by residues 37–41 (GGGSN), 125–127 (GTG), glutamate 156, lysine 160, and aspartate 204.

Belongs to the FtsZ family. In terms of assembly, homodimer. Polymerizes to form a dynamic ring structure in a strictly GTP-dependent manner. Interacts directly with several other division proteins.

Its subcellular location is the cytoplasm. Functionally, essential cell division protein that forms a contractile ring structure (Z ring) at the future cell division site. The regulation of the ring assembly controls the timing and the location of cell division. One of the functions of the FtsZ ring is to recruit other cell division proteins to the septum to produce a new cell wall between the dividing cells. Binds GTP and shows GTPase activity. The protein is Cell division protein FtsZ of Helicobacter pylori (strain J99 / ATCC 700824) (Campylobacter pylori J99).